Reading from the N-terminus, the 89-residue chain is Small ribosomal subunit protein uS14 (89 aa).

Belongs to the universal ribosomal protein uS14 family. In terms of assembly, part of the 30S ribosomal subunit. Contacts proteins S3 and S10.

Functionally, binds 16S rRNA, required for the assembly of 30S particles and may also be responsible for determining the conformation of the 16S rRNA at the A site. This is Small ribosomal subunit protein uS14 from Deinococcus radiodurans (strain ATCC 13939 / DSM 20539 / JCM 16871 / CCUG 27074 / LMG 4051 / NBRC 15346 / NCIMB 9279 / VKM B-1422 / R1).